Here is a 287-residue protein sequence, read N- to C-terminus: MPELPEVETVRRGLEPVLSGARLSSVRANRPDLRFPLPDGFVQRLTGARILRLDRRAKYILAPLDRGDTLVMHLGMTGRFEIAAPEGTVRPGDFAREVTPDDKHAHVVFQTEDGATVTYFDPRRFGFMDLIPTDRVSHHAWFAAMGPEPLGEGFDARTLEKAFANRKQGPKTLLLDQRTVAGLGNIYVCEALHRSGISPFKPSGNIAKKRLTPLTAAIKDVLAEAVEVGGSTLKDFAAADGALGYFQHRFRVYDREGEPCPTPACKGVIAREVQAGRSTFFCPVCQV.

The active-site Schiff-base intermediate with DNA is P2. E3 functions as the Proton donor in the catalytic mechanism. K58 (proton donor; for beta-elimination activity) is an active-site residue. Residues H104, R123, and R166 each coordinate DNA. The segment at 251–287 (RVYDREGEPCPTPACKGVIAREVQAGRSTFFCPVCQV) adopts an FPG-type zinc-finger fold. R277 functions as the Proton donor; for delta-elimination activity in the catalytic mechanism.

The protein belongs to the FPG family. As to quaternary structure, monomer. Zn(2+) serves as cofactor.

It carries out the reaction Hydrolysis of DNA containing ring-opened 7-methylguanine residues, releasing 2,6-diamino-4-hydroxy-5-(N-methyl)formamidopyrimidine.. The enzyme catalyses 2'-deoxyribonucleotide-(2'-deoxyribose 5'-phosphate)-2'-deoxyribonucleotide-DNA = a 3'-end 2'-deoxyribonucleotide-(2,3-dehydro-2,3-deoxyribose 5'-phosphate)-DNA + a 5'-end 5'-phospho-2'-deoxyribonucleoside-DNA + H(+). Functionally, involved in base excision repair of DNA damaged by oxidation or by mutagenic agents. Acts as a DNA glycosylase that recognizes and removes damaged bases. Has a preference for oxidized purines, such as 7,8-dihydro-8-oxoguanine (8-oxoG). Has AP (apurinic/apyrimidinic) lyase activity and introduces nicks in the DNA strand. Cleaves the DNA backbone by beta-delta elimination to generate a single-strand break at the site of the removed base with both 3'- and 5'-phosphates. The sequence is that of Formamidopyrimidine-DNA glycosylase from Caulobacter vibrioides (strain ATCC 19089 / CIP 103742 / CB 15) (Caulobacter crescentus).